The primary structure comprises 169 residues: Regulator of sigma D (169 aa).

Belongs to the Rsd/AlgQ family. Interacts with RpoD.

The protein resides in the cytoplasm. In terms of biological role, binds RpoD and negatively regulates RpoD-mediated transcription activation by preventing the interaction between the primary sigma factor RpoD with the catalytic core of the RNA polymerase and with promoter DNA. May be involved in replacement of the RNA polymerase sigma subunit from RpoD to RpoS during the transition from exponential growth to the stationary phase. This Yersinia pestis protein is Regulator of sigma D.